The primary structure comprises 290 residues: MAALRALLPRACNSLLSPVRCPEFRRFASGANFQYIITEKKGKNSSVGLIQLNRPKALNALCNGLIEELNQALETFEEDPAVGAIVLTGGEKAFAAGADIKEMQNRTFQDCYSGKFLSHWDHITRIKKPVIAAVNGYALGGGCELAMMCDIIYAGEKAQFGQPEILLGTIPGAGGTQRLTRAVGKSLAMEMVLTGDRISAQDAKQAGLVSKIFPVETLVEEAIQCAEKIANNSKIIVAMAKESVNAAFEMTLTEGNKLEKKLFYSTFATDDRREGMSAFVEKRKANFKDH.

The N-terminal 29 residues, 1–29 (MAALRALLPRACNSLLSPVRCPEFRRFAS), are a transit peptide targeting the mitochondrion. Substrate is bound at residue 98-101 (ADIK). Lysine 101 and lysine 115 each carry N6-acetyllysine; alternate. 2 positions are modified to N6-succinyllysine; alternate: lysine 101 and lysine 115. Substrate is bound at residue glycine 141. Position 204 is an N6-succinyllysine (lysine 204). At lysine 211 the chain carries N6-acetyllysine.

Belongs to the enoyl-CoA hydratase/isomerase family. As to quaternary structure, homohexamer; dimer of trimers. As to expression, detected in liver (at protein level).

It localises to the mitochondrion matrix. It catalyses the reaction a (3S)-3-hydroxyacyl-CoA = a (2E)-enoyl-CoA + H2O. The enzyme catalyses a (3E)-enoyl-CoA = a 4-saturated (2E)-enoyl-CoA. It carries out the reaction (3E)-hexenoyl-CoA = (2E)-hexenoyl-CoA. The catalysed reaction is (3S)-3-hydroxybutanoyl-CoA = (2E)-butenoyl-CoA + H2O. It catalyses the reaction 3-hydroxyisovaleryl-CoA = 3-methylbut-2-enoyl-CoA + H2O. The enzyme catalyses 3-hydroxypropanoyl-CoA = acryloyl-CoA + H2O. It carries out the reaction 3-hydroxybutanoyl-CoA = (2E)-butenoyl-CoA + H2O. The catalysed reaction is 2-methylpropenoyl-CoA + H2O = (S)-3-hydroxyisobutanoyl-CoA. It catalyses the reaction (3S)-hydroxyhexanoyl-CoA = (2E)-hexenoyl-CoA + H2O. The enzyme catalyses (3S)-hydroxydecanoyl-CoA = (2E)-decenoyl-CoA + H2O. It participates in lipid metabolism; fatty acid beta-oxidation. Converts unsaturated trans-2-enoyl-CoA species ((2E)-enoyl-CoA) to the corresponding 3(S)-3-hydroxyacyl-CoA species through addition of a water molecule to the double bond. Catalyzes the hydration of medium- and short-chained fatty enoyl-CoA thioesters from 4 carbons long (C4) up to C16. Has high substrate specificity for crotonyl-CoA ((2E)-butenoyl-CoA) and moderate specificity for acryloyl-CoA, 3-methylcrotonyl-CoA (3-methyl-(2E)-butenoyl-CoA) and methacrylyl-CoA ((2E)-2-methylpropenoyl-CoA). Can bind tiglyl-CoA (2-methylcrotonoyl-CoA), but hydrates only a small amount of this substrate. Plays a key role in the beta-oxidation spiral of short- and medium-chain fatty acid oxidation. At a lower rate than the hydratase reaction, catalyzes the isomerase reaction of trans-3-enoyl-CoA species (such as (3E)-hexenoyl-CoA) to trans-2-enoyl-CoA species (such as (2E)-hexenoyl-CoA), which are subsequently hydrated to 3(S)-3-hydroxyacyl-CoA species (such as (3S)-hydroxyhexanoyl-CoA). The polypeptide is Enoyl-CoA hydratase, mitochondrial (Rattus norvegicus (Rat)).